The primary structure comprises 103 residues: Large ribosomal subunit protein bL21 (103 aa).

This sequence belongs to the bacterial ribosomal protein bL21 family. Part of the 50S ribosomal subunit. Contacts protein L20.

This protein binds to 23S rRNA in the presence of protein L20. The polypeptide is Large ribosomal subunit protein bL21 (Thermobifida fusca (strain YX)).